We begin with the raw amino-acid sequence, 740 residues long: Phosphoribosylformylglycinamidine synthase subunit PurL (740 aa).

H54 is an active-site residue. The ATP site is built by Y57 and K96. Position 98 (E98) interacts with Mg(2+). Substrate contacts are provided by residues 99 to 102 (SHNH) and R121. Residue H100 is the Proton acceptor of the active site. D122 contacts Mg(2+). Q245 is a binding site for substrate. D273 is a binding site for Mg(2+). 317–319 (ESQ) is a binding site for substrate. Residues D499 and G536 each contribute to the ATP site. Mg(2+) is bound at residue N537. Substrate is bound at residue S539.

The protein belongs to the FGAMS family. Monomer. Part of the FGAM synthase complex composed of 1 PurL, 1 PurQ and 2 PurS subunits.

It localises to the cytoplasm. The catalysed reaction is N(2)-formyl-N(1)-(5-phospho-beta-D-ribosyl)glycinamide + L-glutamine + ATP + H2O = 2-formamido-N(1)-(5-O-phospho-beta-D-ribosyl)acetamidine + L-glutamate + ADP + phosphate + H(+). It functions in the pathway purine metabolism; IMP biosynthesis via de novo pathway; 5-amino-1-(5-phospho-D-ribosyl)imidazole from N(2)-formyl-N(1)-(5-phospho-D-ribosyl)glycinamide: step 1/2. Its function is as follows. Part of the phosphoribosylformylglycinamidine synthase complex involved in the purines biosynthetic pathway. Catalyzes the ATP-dependent conversion of formylglycinamide ribonucleotide (FGAR) and glutamine to yield formylglycinamidine ribonucleotide (FGAM) and glutamate. The FGAM synthase complex is composed of three subunits. PurQ produces an ammonia molecule by converting glutamine to glutamate. PurL transfers the ammonia molecule to FGAR to form FGAM in an ATP-dependent manner. PurS interacts with PurQ and PurL and is thought to assist in the transfer of the ammonia molecule from PurQ to PurL. The polypeptide is Phosphoribosylformylglycinamidine synthase subunit PurL (Anoxybacillus flavithermus (strain DSM 21510 / WK1)).